Here is a 211-residue protein sequence, read N- to C-terminus: Probable septum site-determining protein MinC (211 aa).

Belongs to the MinC family. In terms of assembly, interacts with MinD and FtsZ.

In terms of biological role, cell division inhibitor that blocks the formation of polar Z ring septums. Rapidly oscillates between the poles of the cell to destabilize FtsZ filaments that have formed before they mature into polar Z rings. Prevents FtsZ polymerization. The sequence is that of Probable septum site-determining protein MinC from Clostridium acetobutylicum (strain ATCC 824 / DSM 792 / JCM 1419 / IAM 19013 / LMG 5710 / NBRC 13948 / NRRL B-527 / VKM B-1787 / 2291 / W).